Here is a 297-residue protein sequence, read N- to C-terminus: Counting factor 45-1 (297 aa).

The N-terminal stretch at 1 to 20 (MNKLISLLLVCLVAIALVNA) is a signal peptide. The region spanning 24-235 (IDFDSDTVNS…SASTGSGSGS (212 aa)) is the Ch-type lysozyme domain. Active-site residues include aspartate 29, aspartate 119, and glutamate 121. N-linked (GlcNAc...) asparagine glycosylation is present at asparagine 166. The tract at residues 231 to 296 (SGSGSSSGSS…GSSSGSGSGS (66 aa)) is S-G-S motif repeats. Residues 231–297 (SGSGSSSGSS…SSSGSGSGSS (67 aa)) form a disordered region. Over residues 234–275 (GSSSGSSSGSSSGSSSGSGSSSGSGSSSGSSSGSGSGSSSSG) the composition is skewed to low complexity. The span at 276-297 (SGSGSGSSSGSGSSSGSGSGSS) shows a compositional bias: gly residues.

The protein belongs to the glycosyl hydrolase 25 family. As to quaternary structure, monomer. Component of the counting factor (CF) complex, which includes cf60, cf50, cf45-1 and ctnA.

It localises to the secreted. Cell-counting factor that limits the maximum size of the multicellular structure during aggregation. This chain is Counting factor 45-1 (cf45-1), found in Dictyostelium discoideum (Social amoeba).